The sequence spans 60 residues: Cytotoxin 1 (60 aa).

4 disulfides stabilise this stretch: cysteine 3–cysteine 21, cysteine 14–cysteine 38, cysteine 42–cysteine 53, and cysteine 54–cysteine 59.

It belongs to the three-finger toxin family. Short-chain subfamily. Type IA cytotoxin sub-subfamily. As to quaternary structure, monomer, or heterodimer with alpha-cobratoxin (AC P01391); disulfide-linked. In terms of tissue distribution, expressed by the venom gland.

Its subcellular location is the secreted. It is found in the target cell membrane. In terms of biological role, monomer: shows cytolytic activity (apoptosis is induced in C2C12 cells, but no cytotoxicity is observed on INS-1E). In addition, this toxin shows insulinotropic activity that may be mediated by the modulation of potassium channels (Kv). It induces the increase of intracellular calcium release. It induces insulin secretion from rat INS-1E cells in absence and in presence of glucose, without affecting cell viability and integrity. In presence of glucose, the insulinotropic activity is increased, suggesting a possible synergistic effect with glucose. Its insulinotropic activity does not involve GLP-1R signaling. Its function is as follows. Heterodimer: has no cytolytic activity, but retains most of the alpha-cobratoxin capacity to compete with alpha-bungarotoxin for binding to Torpedo and alpha-7/CHRNA7 nicotinic acetylcholine receptors (nAChRs) as well as to Lymnea stagnalis acetylcholine-binding protein. The chain is Cytotoxin 1 from Naja kaouthia (Monocled cobra).